A 485-amino-acid chain; its full sequence is Glutamyl-tRNA(Gln) amidotransferase subunit A (485 aa).

Active-site charge relay system residues include Lys76 and Ser151. Ser175 (acyl-ester intermediate) is an active-site residue.

The protein belongs to the amidase family. GatA subfamily. In terms of assembly, heterotrimer of A, B and C subunits.

It catalyses the reaction L-glutamyl-tRNA(Gln) + L-glutamine + ATP + H2O = L-glutaminyl-tRNA(Gln) + L-glutamate + ADP + phosphate + H(+). Its function is as follows. Allows the formation of correctly charged Gln-tRNA(Gln) through the transamidation of misacylated Glu-tRNA(Gln) in organisms which lack glutaminyl-tRNA synthetase. The reaction takes place in the presence of glutamine and ATP through an activated gamma-phospho-Glu-tRNA(Gln). This chain is Glutamyl-tRNA(Gln) amidotransferase subunit A, found in Thiobacillus denitrificans (strain ATCC 25259 / T1).